The primary structure comprises 179 residues: Signal peptidase complex catalytic subunit SEC11A (179 aa).

The Cytoplasmic portion of the chain corresponds to 1 to 16; it reads MLSLDFLDDVRRMNKR. The chain crosses the membrane as a helical; Signal-anchor for type II membrane protein span at residues 17–36; the sequence is QLYYQVLNFGMIVSSALMIW. Residues 37 to 179 lie on the Lumenal side of the membrane; that stretch reads KGLMVITGSE…LGLFVLVHRE (143 aa). Catalysis depends on charge relay system residues Ser-56, His-96, and Asp-122. The tract at residues 165 to 176 is C-terminal short (CTS) helix; it reads AVLFLLGLFVLV.

Belongs to the peptidase S26B family. In terms of assembly, component of the signal peptidase complex paralog A (SPC-A) composed of a catalytic subunit SEC11A and three accessory subunits SPCS1, SPCS2 and SPCS3. Within the complex, interacts with SPCS2 and SPCS3. The complex induces a local thinning of the ER membrane which is used to measure the length of the signal peptide (SP) h-region of protein substrates. This ensures the selectivity of the complex towards h-regions shorter than 18-20 amino acids.

It is found in the endoplasmic reticulum membrane. It carries out the reaction Cleavage of hydrophobic, N-terminal signal or leader sequences from secreted and periplasmic proteins.. Its function is as follows. Catalytic component of the signal peptidase complex (SPC) which catalyzes the cleavage of N-terminal signal sequences from nascent proteins as they are translocated into the lumen of the endoplasmic reticulum. Specifically cleaves N-terminal signal peptides that contain a hydrophobic alpha-helix (h-region) shorter than 18-20 amino acids. This chain is Signal peptidase complex catalytic subunit SEC11A (SEC11A), found in Bos taurus (Bovine).